A 259-amino-acid polypeptide reads, in one-letter code: tRNA (guanine-N(1)-)-methyltransferase (259 aa).

S-adenosyl-L-methionine is bound by residues Gly-113 and 133-138 (IGDYVL).

The protein belongs to the RNA methyltransferase TrmD family. As to quaternary structure, homodimer.

The protein localises to the cytoplasm. The enzyme catalyses guanosine(37) in tRNA + S-adenosyl-L-methionine = N(1)-methylguanosine(37) in tRNA + S-adenosyl-L-homocysteine + H(+). Functionally, specifically methylates guanosine-37 in various tRNAs. This is tRNA (guanine-N(1)-)-methyltransferase from Xanthomonas oryzae pv. oryzae (strain MAFF 311018).